Consider the following 156-residue polypeptide: Keratin, high-sulfur matrix protein, B2B (156 aa).

Position 1 is an N-acetylalanine (A1). 4 repeats span residues 26–35 (PTCSQTSCCQ), 36–45 (PTSIQTSCCQ), 46–55 (PISIQTSCCQ), and 56–65 (PTCLQTSGCE).

In terms of biological role, the keratin products of mammalian epidermal derivatives such as wool and hair consist of microfibrils embedded in a rigid matrix of other proteins. The matrix proteins include the high-sulfur and high-tyrosine keratins, having molecular weights of 6-20 kDa, whereas the microfibrils contain the larger, low-sulfur keratins (40-56 kDa). In Ovis aries (Sheep), this protein is Keratin, high-sulfur matrix protein, B2B.